A 100-amino-acid chain; its full sequence is Urease subunit gamma (100 aa).

Belongs to the urease gamma subunit family. In terms of assembly, heterotrimer of UreA (gamma), UreB (beta) and UreC (alpha) subunits. Three heterotrimers associate to form the active enzyme.

The protein localises to the cytoplasm. The catalysed reaction is urea + 2 H2O + H(+) = hydrogencarbonate + 2 NH4(+). It functions in the pathway nitrogen metabolism; urea degradation; CO(2) and NH(3) from urea (urease route): step 1/1. This Haemophilus influenzae (strain PittEE) protein is Urease subunit gamma.